The primary structure comprises 174 residues: Myosin regulatory light chain sqh (174 aa).

Thr-21 bears the Phosphothreonine mark. Ser-22 is subject to Phosphoserine. EF-hand domains lie at 31–66 (AQIA…LGKN) and 100–135 (DPED…MGDR). Residues Asp-44, Asn-46, Asp-48, and Asp-55 each coordinate Ca(2+).

In terms of assembly, myosin is a hexamer of 2 heavy chains and 4 light chains. Post-translationally, phosphorylation plays a central role in myosin regulation.

Its function is as follows. Required for cytokinesis, could regulate contractile ring function. This Drosophila melanogaster (Fruit fly) protein is Myosin regulatory light chain sqh (sqh).